A 497-amino-acid chain; its full sequence is 3-octaprenyl-4-hydroxybenzoate carboxy-lyase (497 aa).

Position 175 (Asn175) interacts with Mn(2+). Residues 178 to 180 (IYR), 192 to 194 (RWL), and 197 to 198 (RG) each bind prenylated FMN. Glu241 serves as a coordination point for Mn(2+). Asp290 acts as the Proton donor in catalysis.

Belongs to the UbiD family. Homohexamer. Prenylated FMN serves as cofactor. Requires Mn(2+) as cofactor.

It is found in the cell membrane. The enzyme catalyses a 4-hydroxy-3-(all-trans-polyprenyl)benzoate + H(+) = a 2-(all-trans-polyprenyl)phenol + CO2. It participates in cofactor biosynthesis; ubiquinone biosynthesis. Its function is as follows. Catalyzes the decarboxylation of 3-octaprenyl-4-hydroxy benzoate to 2-octaprenylphenol, an intermediate step in ubiquinone biosynthesis. In Shigella dysenteriae serotype 1 (strain Sd197), this protein is 3-octaprenyl-4-hydroxybenzoate carboxy-lyase.